The sequence spans 301 residues: MTTTTADHNISAQQKAVEENLVNRVLQSFDACENPRLKQLMESLVVHLHDFIRDVRLTEDEWNYAIDFLTAVGHITDDKRQEFVLLSDTLGASMQTIAVNNEAYENSTEATVFGPFFLDDAPEVELGGDIAGGAQGQAAWIEGTVTDTEGNPVPNARIEVWECDEDGLYDVQYADERMAGRAYMHTDANGDYRFWGLTPVPYPIPHDGPVGNMLKAVGRSPVRCAHLHFMVTAPELRTLVTHIFVEGDPQLEIGDSVFGVKDSLIKKFEEQAPGTPTPDGRDLGDQTWARTRFDIVLAPGA.

Residues Y169, Y202, H226, and H228 each coordinate Fe cation.

Belongs to the intradiol ring-cleavage dioxygenase family. It depends on Fe(3+) as a cofactor.

The enzyme catalyses benzene-1,2,4-triol + O2 = maleylacetate + 2 H(+). The protein operates within aromatic compound metabolism. Its function is as follows. Involved in resorcinol degradation. Catalyzes the conversion of hydroxyquinol to malelylacetate. Also shows weak activity with catechol, 3-methylcatechol and 4-methylcatechol, but cannot use 4-chlorocatechol, 4-nitrocatechol or protocatechuate. In Corynebacterium glutamicum (strain ATCC 13032 / DSM 20300 / JCM 1318 / BCRC 11384 / CCUG 27702 / LMG 3730 / NBRC 12168 / NCIMB 10025 / NRRL B-2784 / 534), this protein is Hydroxyquinol 1,2-dioxygenase.